The chain runs to 790 residues: Cadherin-6 (790 aa).

Residues 1 to 30 form the signal peptide; that stretch reads MRTYHCFWLLFWAGQPHQSFLTLLSKRTSG. A propeptide spanning residues 31–53 is cleaved from the precursor; sequence FPEKEKVLVLSGNSRRDLSRSKR. Cadherin domains follow at residues 54 to 159, 160 to 268, 269 to 383, 384 to 486, and 487 to 608; these read SWMW…EPMF, TKDV…PPRF, PQST…PPVF, SRPA…DNAP, and EFAM…LIHP. Topologically, residues 54–615 are extracellular; it reads SWMWNQFFLL…IHPTGLSTGA (562 aa). N-linked (GlcNAc...) asparagine glycans are attached at residues asparagine 165 and asparagine 255. The interval 261–289 is disordered; the sequence is VNDNPPRFPQSTYQFRAPESTPPDSPIGR. N-linked (GlcNAc...) asparagine glycosylation is found at asparagine 437, asparagine 455, and asparagine 536. A helical transmembrane segment spans residues 616–636; sequence LIAILLCIIILLVTVVLFAAL. At 637–790 the chain is on the cytoplasmic side; that stretch reads RRQRKKEPLI…YGSMDSDKDS (154 aa).

The protein resides in the cell membrane. Functionally, cadherins are calcium-dependent cell adhesion proteins. They preferentially interact with themselves in a homophilic manner in connecting cells; cadherins may thus contribute to the sorting of heterogeneous cell types. This Gallus gallus (Chicken) protein is Cadherin-6 (CDH6).